Here is a 500-residue protein sequence, read N- to C-terminus: Pyridine nucleotide-disulfide oxidoreductase domain-containing protein 1 (500 aa).

M1 carries the post-translational modification N-acetylmethionine. The disordered stretch occupies residues T211–L235. Over residues Y213–A228 the composition is skewed to basic and acidic residues.

Belongs to the class-I pyridine nucleotide-disulfide oxidoreductase family. PYROXD1 subfamily. Requires FAD as cofactor.

Its subcellular location is the nucleus. The protein localises to the cytoplasm. The protein resides in the myofibril. It is found in the sarcomere. Functionally, probable FAD-dependent oxidoreductase; involved in the cellular oxidative stress response. Required for normal sarcomere structure and muscle fiber integrity. This chain is Pyridine nucleotide-disulfide oxidoreductase domain-containing protein 1 (PYROXD1), found in Homo sapiens (Human).